Reading from the N-terminus, the 201-residue chain is 3-isopropylmalate dehydratase small subunit (201 aa).

This sequence belongs to the LeuD family. LeuD type 1 subfamily. Heterodimer of LeuC and LeuD.

It catalyses the reaction (2R,3S)-3-isopropylmalate = (2S)-2-isopropylmalate. Its pathway is amino-acid biosynthesis; L-leucine biosynthesis; L-leucine from 3-methyl-2-oxobutanoate: step 2/4. Functionally, catalyzes the isomerization between 2-isopropylmalate and 3-isopropylmalate, via the formation of 2-isopropylmaleate. The chain is 3-isopropylmalate dehydratase small subunit from Rhodopseudomonas palustris (strain BisA53).